A 554-amino-acid chain; its full sequence is Calcium/calmodulin-dependent protein kinase type II delta 2 chain (554 aa).

Residues 13–271 (YQLFEELGKG…AAEAPKHPWI (259 aa)) form the Protein kinase domain. Residues 19–27 (LGKGAFSVV) and K42 each bind ATP. Catalysis depends on D135, which acts as the Proton acceptor. T286 carries the phosphothreonine modification. S314 and S318 each carry phosphoserine. 2 disordered regions span residues 324–375 (PDGV…TIED) and 392–413 (WQPS…SSVQ). The span at 330–340 (NNKTNLASSPK) shows a compositional bias: polar residues. T372 bears the Phosphothreonine mark.

This sequence belongs to the protein kinase superfamily. CAMK Ser/Thr protein kinase family. CaMK subfamily. CAMK2 is composed of four different chains: alpha, beta, gamma, and delta. The different isoforms assemble into homo- or heteromultimeric holoenzymes composed of 8 to 12 subunits. First detected at 18 hpf. At 24 hpf, expressed in discrete anterior locations and along either side of the midline. At 48 hpf, expression is predominantly in the forebrain, and then accumulates in the forebrain, hindbrain, and retinal epithelium at 72 hpf.

The enzyme catalyses L-seryl-[protein] + ATP = O-phospho-L-seryl-[protein] + ADP + H(+). It carries out the reaction L-threonyl-[protein] + ATP = O-phospho-L-threonyl-[protein] + ADP + H(+). Autophosphorylation of CAMK2 plays an important role in the regulation of the kinase activity. CaM-kinase II (CAMK2) is a prominent kinase in the central nervous system. The protein is Calcium/calmodulin-dependent protein kinase type II delta 2 chain (camk2d2) of Danio rerio (Zebrafish).